Here is a 329-residue protein sequence, read N- to C-terminus: uncharacterized protein (329 aa).

Residues 1-22 (MPLCNNFSGNLVVAVALFFAGA) form the signal peptide.

This is an uncharacterized protein from Arabidopsis thaliana (Mouse-ear cress).